Here is a 360-residue protein sequence, read N- to C-terminus: Thiol protease SEN102 (360 aa).

An N-terminal signal peptide occupies residues 1-20; that stretch reads MAKPKFIALALVALSFLSIA. A propeptide spans 21–133 (activation peptide); it reads QSIPFTEKDL…ENVGSLPAAS (113 aa). Intrachain disulfides connect C151-C193, C185-C225, and C283-C335. C154 is a catalytic residue. Residues H289 and N310 contribute to the active site. An N-linked (GlcNAc...) asparagine glycan is attached at N353. The Prevents secretion from ER signature appears at 357 to 360; that stretch reads RDEL.

It belongs to the peptidase C1 family.

The protein localises to the endoplasmic reticulum lumen. This chain is Thiol protease SEN102 (SEN102), found in Hemerocallis sp. (Daylily).